Consider the following 289-residue polypeptide: Myoblast determination protein 1 homolog A (289 aa).

Residues 95-146 (DRRKAATMRERRRLSKVNEAFETLKRYTSTNPNQRLPKVEILRNAIRYIESL) form the bHLH domain. Residues 165–212 (SGDSDASSPRSNCSDGMMDYNSPPCGSRRRNSYDSSFYSDSPNDSRLG) form a disordered region. 2 stretches are compositionally biased toward polar residues: residues 168–178 (SDASSPRSNCS) and 197–208 (YDSSFYSDSPND).

As to quaternary structure, efficient DNA binding requires dimerization with another bHLH protein.

The protein localises to the nucleus. Functionally, may act as a transcriptional activator that promotes transcription of muscle-specific target genes and plays a role in muscle differentiation. This is Myoblast determination protein 1 homolog A (myod1-a) from Xenopus laevis (African clawed frog).